The following is a 137-amino-acid chain: Large ribosomal subunit protein uL16 (137 aa).

It belongs to the universal ribosomal protein uL16 family. In terms of assembly, part of the 50S ribosomal subunit.

Functionally, binds 23S rRNA and is also seen to make contacts with the A and possibly P site tRNAs. In Nitratidesulfovibrio vulgaris (strain DSM 19637 / Miyazaki F) (Desulfovibrio vulgaris), this protein is Large ribosomal subunit protein uL16.